The following is a 208-amino-acid chain: MLSRSMKDLLTMLKQHGINDERLLEAMSKVPRELFIDEALSHKAYENTALPIGNGQTISQPYIVAKMTSLLELQATDSVLEIGTGSGYQTAVLANLVHHVSSVERIKILQWQAKRRFKHLDLHNISTRHGDGWEGWVSKGPFNAIIVTACATEVPQRLLMQLADGGRMIIPVGEQQQMLKFIRRLGNDFHYQSIEAVRFVPLIAGELA.

Ser59 is a catalytic residue.

This sequence belongs to the methyltransferase superfamily. L-isoaspartyl/D-aspartyl protein methyltransferase family.

It is found in the cytoplasm. The enzyme catalyses [protein]-L-isoaspartate + S-adenosyl-L-methionine = [protein]-L-isoaspartate alpha-methyl ester + S-adenosyl-L-homocysteine. Its function is as follows. Catalyzes the methyl esterification of L-isoaspartyl residues in peptides and proteins that result from spontaneous decomposition of normal L-aspartyl and L-asparaginyl residues. It plays a role in the repair and/or degradation of damaged proteins. This is Protein-L-isoaspartate O-methyltransferase from Proteus mirabilis (strain HI4320).